A 423-amino-acid polypeptide reads, in one-letter code: MSFNIWWLILYFSIVCQAKAHYSLRDFKANIFQVKYQWKYFDYNFGSDEKRQAAIQSGEYNYKNNVPIDVDRWNGKTFVTILRNDGVPSSLNVISNKIGNGGPLLEPYPNWSWAKNQNCSGITSVYRIAIDEWDRLWVLDNGISGETSVCPSQIVVFDLKNSKLLKQVKIPHDIAINSTTGKRNVVTPIVQSFDYNNTWVYIADVEGYALIIYNNADDSFQRLTSSTFVYDPRYTKYTINDESFSLQDGILGMALSHKTQNLYYSAMSSHNLNYVNTKQFTQGKFQANDIQYQGASDILWTQASAKAISETGALFFGLVSDTALGCWNENRPLKRRNIEIVAKNNDTLQFISGIKIIKQISSNIYERQNNEYIWIVSNKYQKIANGDLNFNEVNFRILNAPVNQLIRYTRCENPKTNFFSIFL.

An N-terminal signal peptide occupies residues 1-20; it reads MSFNIWWLILYFSIVCQAKA. N-linked (GlcNAc...) asparagine glycans are attached at residues N110, N118, N177, N196, and N345.

This sequence belongs to the major royal jelly protein family. In terms of tissue distribution, expressed at very low levels in the hypopharyngeal glands of adult worker bees (at protein level); expression peaks at 12 days post eclosion. Secreted into bee venom in the sting apparatus (at protein level). Expressed in the brains of adult worker bees peaking at 12 days post eclosion (at protein level). Expressed in the spermatheca of adult queen bees (at protein level); expression levels are higher in mated queens than in virgin queens. Along with Mrjp8 expressed at very low levels in the head of worker bees compared to other major royal jelly proteins.

Its subcellular location is the secreted. Functionally, component of bee sting venom. Component of royal jelly, a substance produced in the hypopharyngeal gland containing proteins, free amino acids, fatty acids, sugars and other nutrients, which is fed to developing larvae by worker nurse bees; may be present only at trace levels. All larvae are fed some royal jelly (also known as worker jelly) early in their development but it forms the principal source of nutrition for larvae destined to become queen bees. Produced in the spermatheca of adult queen bees, along with other major royal jelly proteins, where it may act as a nutrient supply for sperm stored by mated queens, or be involved in energy metabolism. The polypeptide is Major royal jelly protein 9 (Apis mellifera (Honeybee)).